The primary structure comprises 667 residues: 1-deoxy-D-xylulose-5-phosphate synthase (667 aa).

Thiamine diphosphate-binding positions include His73 and 113-115 (SHA). Position 145 (Asp145) interacts with Mg(2+). Residues 146–147 (GA), Asn175, Tyr297, and Glu379 contribute to the thiamine diphosphate site. A Mg(2+)-binding site is contributed by Asn175.

It belongs to the transketolase family. DXPS subfamily. In terms of assembly, homodimer. It depends on Mg(2+) as a cofactor. Requires thiamine diphosphate as cofactor.

It catalyses the reaction D-glyceraldehyde 3-phosphate + pyruvate + H(+) = 1-deoxy-D-xylulose 5-phosphate + CO2. It participates in metabolic intermediate biosynthesis; 1-deoxy-D-xylulose 5-phosphate biosynthesis; 1-deoxy-D-xylulose 5-phosphate from D-glyceraldehyde 3-phosphate and pyruvate: step 1/1. Its function is as follows. Catalyzes the acyloin condensation reaction between C atoms 2 and 3 of pyruvate and glyceraldehyde 3-phosphate to yield 1-deoxy-D-xylulose-5-phosphate (DXP). The protein is 1-deoxy-D-xylulose-5-phosphate synthase of Kocuria rhizophila (strain ATCC 9341 / DSM 348 / NBRC 103217 / DC2201).